Reading from the N-terminus, the 345-residue chain is Serine proteinase inhibitor 2 (345 aa).

Belongs to the serpin family. Poxviruses subfamily.

The protein localises to the host cytoplasm. Functionally, viral serpin that inhibits both cysteine and serine proteinases involved in the regulation of host inflammatory and apoptosis processes. Major anti-apoptotic protein which inhibits both intrinsic and extrinsic pathways and strongly cleaves host CASP1 and CASP8 but is a rather poor inhibitor of host CASP3. Prevents the proteolytic activity of host interleukin-1-beta converting enzyme (ICE) and ICE-like enzymes. Can also block apoptosis through host tumor necrosis factor (TNF) receptor. The inhibition of host ICE is an example of a 'cross-class' interaction, in which a serpin inhibits a non-serine proteinase. Also inhibits granzyme B. This chain is Serine proteinase inhibitor 2 (OPG199), found in Rabbitpox virus (strain Utrecht) (RPV).